Here is a 132-residue protein sequence, read N- to C-terminus: T-cell receptor alpha chain V region 2B4 (132 aa).

The signal sequence occupies residues 1–20; that stretch reads MKSLSVSLVVLWLLLNWVNS. The segment at 21–113 is v segment; it reads QQNVQQSPES…SALYLCAVTL (93 aa). Residue Asn-42 is glycosylated (N-linked (GlcNAc...) asparagine). The interval 114–117 is d segment; it reads YGGS. The tract at residues 118–132 is j segment; that stretch reads GNKLIFGTGTLLSVK.

The chain is T-cell receptor alpha chain V region 2B4 from Mus musculus (Mouse).